The sequence spans 186 residues: Lumazine protein (186 aa).

Lumazine-binding repeat units follow at residues 1–96 and 97–186; these read MFRG…VGRG and GLTG…LNEW.

6,7-dimethyl-8-(1-D-ribityl)lumazine serves as cofactor.

In terms of biological role, antenna protein that modulates the color of the bioluminescence emission of the luciferase. In the presence of LumP, luciferase emission is shifted to higher energy values (shorter wavelength). This chain is Lumazine protein (lumP), found in Photobacterium leiognathi.